A 231-amino-acid polypeptide reads, in one-letter code: Orotidine 5'-phosphate decarboxylase (231 aa).

Substrate contacts are provided by residues Asp-11, Lys-33, 60-69 (DLKFHDIPNT), Thr-120, Arg-181, Gln-190, Gly-210, and Arg-211. Residue Lys-62 is the Proton donor of the active site.

Belongs to the OMP decarboxylase family. Type 1 subfamily. As to quaternary structure, homodimer.

It carries out the reaction orotidine 5'-phosphate + H(+) = UMP + CO2. It participates in pyrimidine metabolism; UMP biosynthesis via de novo pathway; UMP from orotate: step 2/2. Functionally, catalyzes the decarboxylation of orotidine 5'-monophosphate (OMP) to uridine 5'-monophosphate (UMP). In Shewanella oneidensis (strain ATCC 700550 / JCM 31522 / CIP 106686 / LMG 19005 / NCIMB 14063 / MR-1), this protein is Orotidine 5'-phosphate decarboxylase.